An 89-amino-acid polypeptide reads, in one-letter code: uncharacterized protein (89 aa).

The chain crosses the membrane as a helical span at residues 67–86 (VYLSSMYICFILLAIWMTVW).

It localises to the membrane. This is an uncharacterized protein from Bacillus subtilis (strain 168).